Here is a 95-residue protein sequence, read N- to C-terminus: Protein RnfH (95 aa).

Belongs to the UPF0125 (RnfH) family.

This is Protein RnfH from Erwinia tasmaniensis (strain DSM 17950 / CFBP 7177 / CIP 109463 / NCPPB 4357 / Et1/99).